Consider the following 599-residue polypeptide: Cytosolic Fe-S cluster assembly factor nar1 (599 aa).

[4Fe-4S] cluster-binding residues include Cys20, Cys62, Cys65, Cys68, Cys210, Cys265, Cys468, and Cys472.

The protein belongs to the NARF family.

In terms of biological role, component of the cytosolic Fe/S protein assembly machinery. Required for maturation of extramitochondrial Fe/S proteins. May play a role in the transfer of pre-assembled Fe/S clusters to target apoproteins. This chain is Cytosolic Fe-S cluster assembly factor nar1 (nar1), found in Aspergillus terreus (strain NIH 2624 / FGSC A1156).